Consider the following 464-residue polypeptide: UDP-N-acetylmuramate--L-alanine ligase (464 aa).

ATP is bound at residue 123–129; it reads GTHGKTT.

Belongs to the MurCDEF family.

Its subcellular location is the cytoplasm. It catalyses the reaction UDP-N-acetyl-alpha-D-muramate + L-alanine + ATP = UDP-N-acetyl-alpha-D-muramoyl-L-alanine + ADP + phosphate + H(+). The protein operates within cell wall biogenesis; peptidoglycan biosynthesis. In terms of biological role, cell wall formation. The polypeptide is UDP-N-acetylmuramate--L-alanine ligase (Carboxydothermus hydrogenoformans (strain ATCC BAA-161 / DSM 6008 / Z-2901)).